We begin with the raw amino-acid sequence, 359 residues long: DNA replication and repair protein RecF (359 aa).

30 to 37 (GQNAQGKT) is an ATP binding site.

Belongs to the RecF family.

The protein resides in the cytoplasm. Functionally, the RecF protein is involved in DNA metabolism; it is required for DNA replication and normal SOS inducibility. RecF binds preferentially to single-stranded, linear DNA. It also seems to bind ATP. The polypeptide is DNA replication and repair protein RecF (Lactococcus lactis subsp. cremoris (strain MG1363)).